A 99-amino-acid polypeptide reads, in one-letter code: DNA-directed RNA polymerase subunit omega (99 aa).

The protein belongs to the RNA polymerase subunit omega family. As to quaternary structure, the RNAP catalytic core consists of 2 alpha, 1 beta, 1 beta' and 1 omega subunit. When a sigma factor is associated with the core the holoenzyme is formed, which can initiate transcription.

It carries out the reaction RNA(n) + a ribonucleoside 5'-triphosphate = RNA(n+1) + diphosphate. Promotes RNA polymerase assembly. Latches the N- and C-terminal regions of the beta' subunit thereby facilitating its interaction with the beta and alpha subunits. In Deinococcus geothermalis (strain DSM 11300 / CIP 105573 / AG-3a), this protein is DNA-directed RNA polymerase subunit omega.